Reading from the N-terminus, the 46-residue chain is Elongation factor Tu (46 aa).

The segment covering 1-10 (MAKGKFERSK) has biased composition (basic and acidic residues). The interval 1–20 (MAKGKFERSKPHVNVGTIGH) is disordered. GTP is bound at residue 19–26 (GHVDHGKT).

It belongs to the GTP-binding elongation factor family. EF-Tu/EF-1A subfamily. As to quaternary structure, monomer.

It is found in the cytoplasm. In terms of biological role, this protein promotes the GTP-dependent binding of aminoacyl-tRNA to the A-site of ribosomes during protein biosynthesis. The protein is Elongation factor Tu (tufA) of Eikenella corrodens.